Reading from the N-terminus, the 231-residue chain is Lecithin retinol acyltransferase (231 aa).

Residues Met-1–Ser-194 lie on the Cytoplasmic side of the membrane. In terms of domain architecture, LRAT spans Val-50–Gln-177. Residues His-60 and His-72 contribute to the active site. Cys-161 (acyl-thioester intermediate) is an active-site residue. The chain crosses the membrane as a helical span at residues Ser-195 to Met-215. Residues Thr-216–Gly-231 lie on the Lumenal side of the membrane.

It belongs to the H-rev107 family. Hepatic stellate cells and endothelial cells (at protein level).

Its subcellular location is the endoplasmic reticulum membrane. It is found in the rough endoplasmic reticulum. The protein resides in the endosome. It localises to the multivesicular body. The protein localises to the cytoplasm. Its subcellular location is the perinuclear region. It catalyses the reaction all-trans-retinol--[retinol-binding protein] + a 1,2-diacyl-sn-glycero-3-phosphocholine = apo--[retinol-binding protein] + an all-trans-retinyl ester + a 2-acyl-sn-glycero-3-phosphocholine. The catalysed reaction is 1,2-diheptanoyl-sn-glycero-3-phosphocholine + all-trans-retinol--[retinol-binding protein] = all-trans-retinyl heptanoate + 2-heptanoyl-sn-glycero-3-phosphocholine + apo--[retinol-binding protein]. The enzyme catalyses 1,2-dioctanoyl-sn-glycero-3-phosphocholine + all-trans-retinol--[retinol-binding protein] = 2-octanoyl-sn-glycero-3-phosphocholine + all-trans-retinyl octanoate + apo--[retinol-binding protein]. It carries out the reaction all-trans-retinol--[retinol-binding protein] + 1,2-dihexadecanoyl-sn-glycero-3-phosphocholine = apo--[retinol-binding protein] + all-trans-retinyl hexadecanoate + 2-hexadecanoyl-sn-glycero-3-phosphocholine. It catalyses the reaction 1,2-didodecanoyl-sn-glycero-3-phosphocholine + all-trans-retinol--[retinol-binding protein] = 2-dodecanoyl-sn-glycero-3-phosphocholine + all-trans-retinyl dodecanoate + apo--[retinol-binding protein]. The catalysed reaction is 1,2-dihexadecanoyl-sn-glycero-3-phosphocholine + all-trans-retinol = all-trans-retinyl hexadecanoate + 2-hexadecanoyl-sn-glycero-3-phosphocholine. It participates in cofactor metabolism; retinol metabolism. Its activity is regulated as follows. Inhibited by all-trans-retinyl alpha-bromoacetate and N-boc-L-biocytinyl-11-aminoundecane chloro-methyl ketone (BACMK). Transfers the acyl group from the sn-1 position of phosphatidylcholine to all-trans retinol, producing all-trans retinyl esters. Retinyl esters are storage forms of vitamin A. LRAT plays a critical role in vision. It provides the all-trans retinyl ester substrates for the isomerohydrolase which processes the esters into 11-cis-retinol in the retinal pigment epithelium; due to a membrane-associated alcohol dehydrogenase, 11 cis-retinol is oxidized and converted into 11-cis-retinaldehyde which is the chromophore for rhodopsin and the cone photopigments. Required for the survival of cone photoreceptors and correct rod photoreceptor cell morphology. The chain is Lecithin retinol acyltransferase (Lrat) from Mus musculus (Mouse).